Here is a 608-residue protein sequence, read N- to C-terminus: 1-deoxy-D-xylulose-5-phosphate synthase (608 aa).

Residues H66 and 107 to 109 (GHA) each bind thiamine diphosphate. D138 provides a ligand contact to Mg(2+). Thiamine diphosphate is bound by residues 139–140 (GA), N167, F277, and E350. N167 is a Mg(2+) binding site.

It belongs to the transketolase family. DXPS subfamily. In terms of assembly, homodimer. Mg(2+) is required as a cofactor. It depends on thiamine diphosphate as a cofactor.

The enzyme catalyses D-glyceraldehyde 3-phosphate + pyruvate + H(+) = 1-deoxy-D-xylulose 5-phosphate + CO2. It participates in metabolic intermediate biosynthesis; 1-deoxy-D-xylulose 5-phosphate biosynthesis; 1-deoxy-D-xylulose 5-phosphate from D-glyceraldehyde 3-phosphate and pyruvate: step 1/1. Its function is as follows. Catalyzes the acyloin condensation reaction between C atoms 2 and 3 of pyruvate and glyceraldehyde 3-phosphate to yield 1-deoxy-D-xylulose-5-phosphate (DXP). The chain is 1-deoxy-D-xylulose-5-phosphate synthase from Thermotoga petrophila (strain ATCC BAA-488 / DSM 13995 / JCM 10881 / RKU-1).